The sequence spans 354 residues: Methylthioribose-1-phosphate isomerase (354 aa).

Residues 58–60 (RGA), Arg101, and Gln204 contribute to the substrate site. The Proton donor role is filled by Asp245. Substrate is bound at residue 255–256 (NK).

Belongs to the eIF-2B alpha/beta/delta subunits family. MtnA subfamily.

The enzyme catalyses 5-(methylsulfanyl)-alpha-D-ribose 1-phosphate = 5-(methylsulfanyl)-D-ribulose 1-phosphate. It participates in amino-acid biosynthesis; L-methionine biosynthesis via salvage pathway; L-methionine from S-methyl-5-thio-alpha-D-ribose 1-phosphate: step 1/6. Its function is as follows. Catalyzes the interconversion of methylthioribose-1-phosphate (MTR-1-P) into methylthioribulose-1-phosphate (MTRu-1-P). The protein is Methylthioribose-1-phosphate isomerase of Xanthomonas euvesicatoria pv. vesicatoria (strain 85-10) (Xanthomonas campestris pv. vesicatoria).